The chain runs to 156 residues: Transcriptional repressor NrdR (156 aa).

The segment at 3–34 (CPYCGHLDNKVIDSRINKDATITRRRRSCLAC) is a zinc-finger region. The 91-residue stretch at 49-139 (PMLVKKDGRR…VYRQFKDVDE (91 aa)) folds into the ATP-cone domain.

This sequence belongs to the NrdR family. The cofactor is Zn(2+).

Functionally, negatively regulates transcription of bacterial ribonucleotide reductase nrd genes and operons by binding to NrdR-boxes. This Desulfotalea psychrophila (strain LSv54 / DSM 12343) protein is Transcriptional repressor NrdR.